A 502-amino-acid polypeptide reads, in one-letter code: ATP synthase subunit alpha (502 aa).

Residue 169-176 (GDRQTGKT) participates in ATP binding.

Belongs to the ATPase alpha/beta chains family. In terms of assembly, F-type ATPases have 2 components, CF(1) - the catalytic core - and CF(0) - the membrane proton channel. CF(1) has five subunits: alpha(3), beta(3), gamma(1), delta(1), epsilon(1). CF(0) has three main subunits: a(1), b(2) and c(9-12). The alpha and beta chains form an alternating ring which encloses part of the gamma chain. CF(1) is attached to CF(0) by a central stalk formed by the gamma and epsilon chains, while a peripheral stalk is formed by the delta and b chains.

It localises to the cell membrane. The catalysed reaction is ATP + H2O + 4 H(+)(in) = ADP + phosphate + 5 H(+)(out). Functionally, produces ATP from ADP in the presence of a proton gradient across the membrane. The alpha chain is a regulatory subunit. This Desulfitobacterium hafniense (strain DSM 10664 / DCB-2) protein is ATP synthase subunit alpha.